A 93-amino-acid chain; its full sequence is YcgL domain-containing protein VV1_0131 (93 aa).

Positions 1-84 constitute a YcgL domain; sequence MLCSIYKSSK…PPENLLQQHK (84 aa). The tract at residues 72-93 is disordered; the sequence is LPPPPENLLQQHKERKAQQKND.

The sequence is that of YcgL domain-containing protein VV1_0131 from Vibrio vulnificus (strain CMCP6).